The sequence spans 426 residues: UPF0229 protein Csal_0882 (426 aa).

Over residues 82–93 (FVEGDRLRRPGG) the composition is skewed to basic and acidic residues. Positions 82 to 109 (FVEGDRLRRPGGEGRGGSGEGSASNQGE) are disordered.

It belongs to the UPF0229 family.

The sequence is that of UPF0229 protein Csal_0882 from Chromohalobacter salexigens (strain ATCC BAA-138 / DSM 3043 / CIP 106854 / NCIMB 13768 / 1H11).